We begin with the raw amino-acid sequence, 438 residues long: Trigger factor (438 aa).

Positions 160-245 (DDKVTIDFVG…VKKIQQAELP (86 aa)) constitute a PPIase FKBP-type domain.

It belongs to the FKBP-type PPIase family. Tig subfamily.

It localises to the cytoplasm. The enzyme catalyses [protein]-peptidylproline (omega=180) = [protein]-peptidylproline (omega=0). Functionally, involved in protein export. Acts as a chaperone by maintaining the newly synthesized protein in an open conformation. Functions as a peptidyl-prolyl cis-trans isomerase. The sequence is that of Trigger factor from Francisella tularensis subsp. mediasiatica (strain FSC147).